A 984-amino-acid chain; its full sequence is Serine/threonine-protein kinase Nek9 (984 aa).

Residue Ser-2 is modified to N-acetylserine. Residues Ser-2, Ser-13, Ser-16, and Ser-20 each carry the phosphoserine modification. Residues 14–43 (INSDFGSESGGGGDSGPGPSAVPGPRAGGG) are disordered. Position 52 is a phosphotyrosine (Tyr-52). The Protein kinase domain maps to 52–308 (YIPIRVLGRG…ADALLDLPLL (257 aa)). Residue 58–66 (LGRGAFGEA) coordinates ATP. Ser-76 carries the phosphoserine modification. Lys-81 is a binding site for ATP. The active-site Proton acceptor is Asp-176. Thr-210 carries the phosphothreonine; by autocatalysis modification. Thr-254 is modified (phosphothreonine). Position 331 is a phosphoserine (Ser-331). Thr-333 carries the phosphothreonine modification. 6 RCC1 repeats span residues 388-444 (KELY…VTDE), 445-498 (GQLY…LTRN), 499-550 (KEVY…LTQS), 551-615 (GKVL…IDER), 616-668 (GRLL…ATDD), and 669-726 (NHIF…IVEK). The interaction with NEK6 stretch occupies residues 732–896 (TIRSNSSGLS…GKALTSAACA (165 aa)). The residue at position 741 (Ser-741) is a Phosphoserine. A disordered region spans residues 744–790 (TVVQSSSPGGGIGGGGGGGGGGGGEEEDSQQESETPDPSGGFRGTME). A compositionally biased stretch (gly residues) spans 751-766 (PGGGIGGGGGGGGGGG). The segment covering 767–778 (GEEEDSQQESET) has biased composition (acidic residues). Phosphoserine is present on residues Ser-808 and Ser-839. A Phosphothreonine modification is found at Thr-891. Positions 896–945 (ACSALQVEVDRLQALVLKCLEEQQKLQQENLQMFTQLQKLNKKLEGGQQV) form a coiled coil. A disordered region spans residues 940–984 (EGGQQVGMHSRGTQTAKEEMEMDPKPDLDSESWCLLGTDSCRPSL). At Ser-949 the chain carries Phosphoserine. Residues 955 to 967 (AKEEMEMDPKPDL) show a composition bias toward basic and acidic residues. Residue Ser-983 is modified to Phosphoserine.

Belongs to the protein kinase superfamily. NEK Ser/Thr protein kinase family. NIMA subfamily. In terms of assembly, homodimer; homodimerization is required to activate NEK7. Binds to Ran GTPase. Has a greater affinity for Ran-GDP over Ran-GTP. Interacts with SSRP1 and SUPT16H, the 2 subunits of the FACT complex. Interacts with DYNLL1; phosphorylation at Ser-949 strongly reduces DYNLL1 binding. It depends on Mg(2+) as a cofactor. Post-translationally, autophosphorylated on serine and threonine residues. When complexed with FACT, exhibits markedly elevated phosphorylation on Thr-210. During mitosis, not phosphorylated on Thr-210. Phosphorylated by CDK1 in vitro.

The protein localises to the cytoplasm. It localises to the nucleus. The catalysed reaction is L-seryl-[protein] + ATP = O-phospho-L-seryl-[protein] + ADP + H(+). The enzyme catalyses L-threonyl-[protein] + ATP = O-phospho-L-threonyl-[protein] + ADP + H(+). With respect to regulation, activated during mitosis by intramolecular autophosphorylation. Activity and autophosphorylation is activated by manganese &gt;&gt; magnesium ions. It is not cell-cycle regulated but activity is higher in G0-arrested cells. Pleiotropic regulator of mitotic progression, participating in the control of spindle dynamics and chromosome separation. Phosphorylates different histones, myelin basic protein, beta-casein, and BICD2. Phosphorylates histone H3 on serine and threonine residues and beta-casein on serine residues. Important for G1/S transition and S phase progression. Phosphorylates NEK6 and NEK7 and stimulates their activity by releasing the autoinhibitory functions of Tyr-108 and Tyr-97 respectively. In Mus musculus (Mouse), this protein is Serine/threonine-protein kinase Nek9.